Here is a 210-residue protein sequence, read N- to C-terminus: Somatotropin-1 (210 aa).

Residues 1–22 (MARALVLLSVVLVSLLVNQGRA) form the signal peptide. His38 contributes to the Zn(2+) binding site. Cysteines 71 and 183 form a disulfide. Position 192 (Glu192) interacts with Zn(2+). Cys200 and Cys208 are oxidised to a cystine.

Belongs to the somatotropin/prolactin family.

It is found in the secreted. Functionally, growth hormone plays an important role in growth control and is involved in the regulation of several anabolic processes. Implicated as an osmoregulatory substance important for seawater adaptation. This is Somatotropin-1 (gh1) from Carassius auratus (Goldfish).